We begin with the raw amino-acid sequence, 561 residues long: Arf-GAP domain and FG repeat-containing protein 1 (561 aa).

One can recognise an Arf-GAP domain in the interval 11–135 (EKHLKMLRDM…WYVPPEQAKV (125 aa)). The C4-type zinc-finger motif lies at 29 to 52 (CFDCDQRGPTYVNMTVGSFVCTSC). S167 is modified (phosphoserine). Residues 171–193 (LHLNKGTPTQSPVVGRSQGQQQE) are disordered. Residues 176–191 (GTPTQSPVVGRSQGQQ) are compositionally biased toward polar residues. Residue T177 is modified to Phosphothreonine. Phosphoserine is present on residues S181 and S362. S367 carries O-linked (GlcNAc) serine glycosylation. Positions 409 to 451 (PVGASPQTQPASSGPAPFGATPSTNPFVAATGPSAASSTNPFQ) are disordered. Positions 442–451 (SAASSTNPFQ) are enriched in polar residues.

As to quaternary structure, interacts with EPS15R and EPS15. Interacts with FCHO1. In terms of processing, O-glycosylated.

The protein localises to the nucleus. Its subcellular location is the cytoplasmic vesicle. Required for vesicle docking or fusion during acrosome biogenesis. May play a role in RNA trafficking or localization. The sequence is that of Arf-GAP domain and FG repeat-containing protein 1 (Agfg1) from Rattus norvegicus (Rat).